The following is a 391-amino-acid chain: NAD(P)H-quinone oxidoreductase subunit H, chloroplastic (391 aa).

It belongs to the complex I 49 kDa subunit family. As to quaternary structure, NDH is composed of at least 16 different subunits, 5 of which are encoded in the nucleus.

The protein resides in the plastid. It localises to the chloroplast thylakoid membrane. The enzyme catalyses a plastoquinone + NADH + (n+1) H(+)(in) = a plastoquinol + NAD(+) + n H(+)(out). It carries out the reaction a plastoquinone + NADPH + (n+1) H(+)(in) = a plastoquinol + NADP(+) + n H(+)(out). In terms of biological role, NDH shuttles electrons from NAD(P)H:plastoquinone, via FMN and iron-sulfur (Fe-S) centers, to quinones in the photosynthetic chain and possibly in a chloroplast respiratory chain. The immediate electron acceptor for the enzyme in this species is believed to be plastoquinone. Couples the redox reaction to proton translocation, and thus conserves the redox energy in a proton gradient. The polypeptide is NAD(P)H-quinone oxidoreductase subunit H, chloroplastic (Nephroselmis olivacea (Green alga)).